We begin with the raw amino-acid sequence, 379 residues long: Queuine tRNA-ribosyltransferase (379 aa).

Asp-94 (proton acceptor) is an active-site residue. Residues 94–98, Asp-148, Gln-191, and Gly-218 contribute to the substrate site; that span reads DSGGF. The RNA binding stretch occupies residues 249 to 255; the sequence is GVGSPDS. The Nucleophile role is filled by Asp-268. Positions 273 to 277 are RNA binding; important for wobble base 34 recognition; that stretch reads TRIAR. Zn(2+) contacts are provided by Cys-306, Cys-308, Cys-311, and His-337.

The protein belongs to the queuine tRNA-ribosyltransferase family. In terms of assembly, homodimer. Within each dimer, one monomer is responsible for RNA recognition and catalysis, while the other monomer binds to the replacement base PreQ1. Requires Zn(2+) as cofactor.

The enzyme catalyses 7-aminomethyl-7-carbaguanine + guanosine(34) in tRNA = 7-aminomethyl-7-carbaguanosine(34) in tRNA + guanine. It participates in tRNA modification; tRNA-queuosine biosynthesis. Catalyzes the base-exchange of a guanine (G) residue with the queuine precursor 7-aminomethyl-7-deazaguanine (PreQ1) at position 34 (anticodon wobble position) in tRNAs with GU(N) anticodons (tRNA-Asp, -Asn, -His and -Tyr). Catalysis occurs through a double-displacement mechanism. The nucleophile active site attacks the C1' of nucleotide 34 to detach the guanine base from the RNA, forming a covalent enzyme-RNA intermediate. The proton acceptor active site deprotonates the incoming PreQ1, allowing a nucleophilic attack on the C1' of the ribose to form the product. After dissociation, two additional enzymatic reactions on the tRNA convert PreQ1 to queuine (Q), resulting in the hypermodified nucleoside queuosine (7-(((4,5-cis-dihydroxy-2-cyclopenten-1-yl)amino)methyl)-7-deazaguanosine). The protein is Queuine tRNA-ribosyltransferase of Halalkalibacterium halodurans (strain ATCC BAA-125 / DSM 18197 / FERM 7344 / JCM 9153 / C-125) (Bacillus halodurans).